The primary structure comprises 61 residues: Insect toxin LqhIT5 (61 aa).

The LCN-type CS-alpha/beta domain occupies 1–61 (DGYIRGGDGC…EWKYETNTCG (61 aa)). Cystine bridges form between C10/C60, C14/C35, C21/C42, and C25/C44.

This sequence belongs to the long (4 C-C) scorpion toxin superfamily. Sodium channel inhibitor family. Beta subfamily. In terms of tissue distribution, expressed by the venom gland.

The protein resides in the secreted. Excitatory insect beta-toxins induce a spastic paralysis. They bind voltage-independently at site-4 of sodium channels (Nav) and shift the voltage of activation toward more negative potentials thereby affecting sodium channel activation and promoting spontaneous and repetitive firing. This toxin is active only on insects. It operates by inducing a fast contraction paralysis without depressant activity. It is more similar to the excitatory toxins in its mode of action and the depressant toxins in its primary structure. This chain is Insect toxin LqhIT5, found in Leiurus hebraeus (Hebrew deathstalker scorpion).